The primary structure comprises 167 residues: Small ribosomal subunit protein uS5 (167 aa).

An S5 DRBM domain is found at 11–74 (LQEKLIAVNR…DKARRNMTTI (64 aa)).

It belongs to the universal ribosomal protein uS5 family. In terms of assembly, part of the 30S ribosomal subunit. Contacts proteins S4 and S8.

Its function is as follows. With S4 and S12 plays an important role in translational accuracy. Functionally, located at the back of the 30S subunit body where it stabilizes the conformation of the head with respect to the body. The polypeptide is Small ribosomal subunit protein uS5 (Baumannia cicadellinicola subsp. Homalodisca coagulata).